A 142-amino-acid polypeptide reads, in one-letter code: Alpha-lactalbumin (142 aa).

An N-terminal signal peptide occupies residues 1–19 (MMSFVSLLLVGILFHATQA). In terms of domain architecture, C-type lysozyme spans 20–142 (EQLTKCEVFQ…KLDQWLCEKL (123 aa)). 4 cysteine pairs are disulfide-bonded: Cys-25–Cys-139, Cys-47–Cys-130, Cys-80–Cys-96, and Cys-92–Cys-110. Residues Asn-64 and Asn-93 are each glycosylated (N-linked (GlcNAc...) asparagine). 5 residues coordinate Ca(2+): Lys-98, Asp-101, Asp-103, Asp-106, and Asp-107.

The protein belongs to the glycosyl hydrolase 22 family. In terms of assembly, lactose synthase (LS) is a heterodimer of a catalytic component, beta1,4-galactosyltransferase (beta4Gal-T1) and a regulatory component, alpha-lactalbumin (LA). Mammary gland specific. Secreted in milk.

It localises to the secreted. Regulatory subunit of lactose synthase, changes the substrate specificity of galactosyltransferase in the mammary gland making glucose a good acceptor substrate for this enzyme. This enables LS to synthesize lactose, the major carbohydrate component of milk. In other tissues, galactosyltransferase transfers galactose onto the N-acetylglucosamine of the oligosaccharide chains in glycoproteins. This Capra hircus (Goat) protein is Alpha-lactalbumin (LALBA).